Consider the following 158-residue polypeptide: Glutamyl-tRNA(Gln) amidotransferase subunit C, mitochondrial (158 aa).

The protein belongs to the GatC family. Subunit of the heterotrimeric GatCAB amidotransferase (AdT) complex, composed of A, B and C subunits.

It is found in the mitochondrion. It carries out the reaction L-glutamyl-tRNA(Gln) + L-glutamine + ATP + H2O = L-glutaminyl-tRNA(Gln) + L-glutamate + ADP + phosphate + H(+). Allows the formation of correctly charged Gln-tRNA(Gln) through the transamidation of misacylated Glu-tRNA(Gln) in the mitochondria. The reaction takes place in the presence of glutamine and ATP through an activated gamma-phospho-Glu-tRNA(Gln). In Drosophila grimshawi (Hawaiian fruit fly), this protein is Glutamyl-tRNA(Gln) amidotransferase subunit C, mitochondrial.